The primary structure comprises 376 residues: Chaperone protein DnaJ (376 aa).

Positions 5-70 (DYYEILGVSK…QKRAAYDQYG (66 aa)) constitute a J domain. A CR-type zinc finger spans residues 131 to 209 (GVTKEIRIPT…CHGHGRVERS (79 aa)). Zn(2+) contacts are provided by C144, C147, C161, C164, C183, C186, C197, and C200. CXXCXGXG motif repeat units lie at residues 144-151 (CDVCHGSG), 161-168 (CPTCHGSG), 183-190 (CPHCQGRG), and 197-204 (CNKCHGHG).

It belongs to the DnaJ family. Homodimer. The cofactor is Zn(2+).

The protein localises to the cytoplasm. Its function is as follows. Participates actively in the response to hyperosmotic and heat shock by preventing the aggregation of stress-denatured proteins and by disaggregating proteins, also in an autonomous, DnaK-independent fashion. Unfolded proteins bind initially to DnaJ; upon interaction with the DnaJ-bound protein, DnaK hydrolyzes its bound ATP, resulting in the formation of a stable complex. GrpE releases ADP from DnaK; ATP binding to DnaK triggers the release of the substrate protein, thus completing the reaction cycle. Several rounds of ATP-dependent interactions between DnaJ, DnaK and GrpE are required for fully efficient folding. Also involved, together with DnaK and GrpE, in the DNA replication of plasmids through activation of initiation proteins. The sequence is that of Chaperone protein DnaJ from Shigella flexneri.